A 161-amino-acid polypeptide reads, in one-letter code: Peptidyl-prolyl cis-trans isomerase (161 aa).

The PPIase cyclophilin-type domain occupies 6 to 160; sequence FFDIKAGDER…KKIIIEDCGE (155 aa).

It belongs to the cyclophilin-type PPIase family. PPIase A subfamily. In terms of tissue distribution, found mainly in the tegument, gut epithelium, and muscle layers. Also found in the interior of the parasite.

It catalyses the reaction [protein]-peptidylproline (omega=180) = [protein]-peptidylproline (omega=0). Binds cyclosporin A (CsA). CsA mediates some of its effects via an inhibitory action on PPIase. Its function is as follows. PPIases accelerate the folding of proteins. It catalyzes the cis-trans isomerization of proline imidic peptide bonds in oligopeptides. The protein is Peptidyl-prolyl cis-trans isomerase of Schistosoma mansoni (Blood fluke).